The chain runs to 263 residues: UPF0246 protein Strop_2927 (263 aa).

The protein belongs to the UPF0246 family.

In Salinispora tropica (strain ATCC BAA-916 / DSM 44818 / JCM 13857 / NBRC 105044 / CNB-440), this protein is UPF0246 protein Strop_2927.